The following is a 470-amino-acid chain: Neuraminidase (470 aa).

Residues Met-1–Lys-6 are Intravirion-facing. The chain crosses the membrane as a helical span at residues Ile-7 to Ala-27. Residues Ser-11–Ile-33 are involved in apical transport and lipid raft association. Over Asn-28 to Lys-470 the chain is Virion surface. The hypervariable stalk region stretch occupies residues His-36–Thr-88. N-linked (GlcNAc...) asparagine; by host glycans are attached at residues Asn-51, Asn-54, Asn-62, Asn-67, Asn-70, and Asn-86. The segment at Leu-91–Lys-470 is head of neuraminidase. Cystine bridges form between Cys-92/Cys-419, Cys-124/Cys-129, Cys-184/Cys-231, Cys-233/Cys-238, Cys-279/Cys-292, Cys-281/Cys-290, Cys-319/Cys-337, and Cys-423/Cys-449. Position 118 (Arg-118) interacts with substrate. The N-linked (GlcNAc...) asparagine; by host glycan is linked to Asn-146. Catalysis depends on Asp-151, which acts as the Proton donor/acceptor. Arg-152 serves as a coordination point for substrate. A glycan (N-linked (GlcNAc...) asparagine; by host) is linked at Asn-201. Glu-277–Glu-278 lines the substrate pocket. Arg-293 lines the substrate pocket. Residues Asp-294, Gly-298, and Asp-325 each contribute to the Ca(2+) site. Arg-372 serves as a coordination point for substrate. N-linked (GlcNAc...) asparagine; by host glycosylation is present at Asn-402. The active-site Nucleophile is Tyr-406.

The protein belongs to the glycosyl hydrolase 34 family. As to quaternary structure, homotetramer. The cofactor is Ca(2+). In terms of processing, N-glycosylated.

It is found in the virion membrane. Its subcellular location is the host apical cell membrane. It catalyses the reaction Hydrolysis of alpha-(2-&gt;3)-, alpha-(2-&gt;6)-, alpha-(2-&gt;8)- glycosidic linkages of terminal sialic acid residues in oligosaccharides, glycoproteins, glycolipids, colominic acid and synthetic substrates.. Inhibited by the neuraminidase inhibitors zanamivir (Relenza) and oseltamivir (Tamiflu). These drugs interfere with the release of progeny virus from infected cells and are effective against all influenza strains. Resistance to neuraminidase inhibitors is quite rare. In terms of biological role, catalyzes the removal of terminal sialic acid residues from viral and cellular glycoconjugates. Cleaves off the terminal sialic acids on the glycosylated HA during virus budding to facilitate virus release. Additionally helps virus spread through the circulation by further removing sialic acids from the cell surface. These cleavages prevent self-aggregation and ensure the efficient spread of the progeny virus from cell to cell. Otherwise, infection would be limited to one round of replication. Described as a receptor-destroying enzyme because it cleaves a terminal sialic acid from the cellular receptors. May facilitate viral invasion of the upper airways by cleaving the sialic acid moieties on the mucin of the airway epithelial cells. Likely to plays a role in the budding process through its association with lipid rafts during intracellular transport. May additionally display a raft-association independent effect on budding. Plays a role in the determination of host range restriction on replication and virulence. Sialidase activity in late endosome/lysosome traffic seems to enhance virus replication. This chain is Neuraminidase, found in Aves (Pig).